Reading from the N-terminus, the 214-residue chain is Probable transaldolase (214 aa).

Catalysis depends on Lys-83, which acts as the Schiff-base intermediate with substrate.

It belongs to the transaldolase family. Type 3B subfamily.

The protein localises to the cytoplasm. It carries out the reaction D-sedoheptulose 7-phosphate + D-glyceraldehyde 3-phosphate = D-erythrose 4-phosphate + beta-D-fructose 6-phosphate. It functions in the pathway carbohydrate degradation; pentose phosphate pathway; D-glyceraldehyde 3-phosphate and beta-D-fructose 6-phosphate from D-ribose 5-phosphate and D-xylulose 5-phosphate (non-oxidative stage): step 2/3. Functionally, transaldolase is important for the balance of metabolites in the pentose-phosphate pathway. The chain is Probable transaldolase from Geobacter sp. (strain M21).